Consider the following 248-residue polypeptide: tRNA uridine(34) hydroxylase (248 aa).

The Rhodanese domain occupies 128-222 (EGRPVVMLDT…YFEEVGGAHY (95 aa)). The active-site Cysteine persulfide intermediate is the cysteine 182.

This sequence belongs to the TrhO family.

The enzyme catalyses uridine(34) in tRNA + AH2 + O2 = 5-hydroxyuridine(34) in tRNA + A + H2O. In terms of biological role, catalyzes oxygen-dependent 5-hydroxyuridine (ho5U) modification at position 34 in tRNAs. This chain is tRNA uridine(34) hydroxylase, found in Thiobacillus denitrificans (strain ATCC 25259 / T1).